A 307-amino-acid chain; its full sequence is Mycothiol acetyltransferase (307 aa).

2 N-acetyltransferase domains span residues 15–158 (HTLD…LAEP) and 164–307 (VTVR…RTES). E46 lines the 1D-myo-inositol 2-(L-cysteinylamino)-2-deoxy-alpha-D-glucopyranoside pocket. Residue 90-92 (LVV) coordinates acetyl-CoA. Residues E191, K230, and E239 each contribute to the 1D-myo-inositol 2-(L-cysteinylamino)-2-deoxy-alpha-D-glucopyranoside site. Residues 243–245 (VGV) and 250–256 (QGGGLGK) each bind acetyl-CoA. Residue Y277 coordinates 1D-myo-inositol 2-(L-cysteinylamino)-2-deoxy-alpha-D-glucopyranoside.

The protein belongs to the acetyltransferase family. MshD subfamily. In terms of assembly, monomer.

The catalysed reaction is 1D-myo-inositol 2-(L-cysteinylamino)-2-deoxy-alpha-D-glucopyranoside + acetyl-CoA = mycothiol + CoA + H(+). Its function is as follows. Catalyzes the transfer of acetyl from acetyl-CoA to desacetylmycothiol (Cys-GlcN-Ins) to form mycothiol. In Streptomyces griseus subsp. griseus (strain JCM 4626 / CBS 651.72 / NBRC 13350 / KCC S-0626 / ISP 5235), this protein is Mycothiol acetyltransferase.